A 639-amino-acid chain; its full sequence is UvrABC system protein C (639 aa).

The GIY-YIG domain occupies 20–97 (ERSGVYRMFD…IKKFQPKFNI (78 aa)). A UVR domain is found at 207–242 (KELQENLSRKMEELSSQMRFEEAAEIRDRIKALSYV).

Belongs to the UvrC family. In terms of assembly, interacts with UvrB in an incision complex.

It localises to the cytoplasm. Functionally, the UvrABC repair system catalyzes the recognition and processing of DNA lesions. UvrC both incises the 5' and 3' sides of the lesion. The N-terminal half is responsible for the 3' incision and the C-terminal half is responsible for the 5' incision. The sequence is that of UvrABC system protein C from Rickettsia conorii (strain ATCC VR-613 / Malish 7).